A 165-amino-acid polypeptide reads, in one-letter code: Putative 4-hydroxy-4-methyl-2-oxoglutarate aldolase (165 aa).

Substrate contacts are provided by residues 80–83 (GGNL) and arginine 102. Aspartate 103 serves as a coordination point for a divalent metal cation.

It belongs to the class II aldolase/RraA-like family. Homotrimer. The cofactor is a divalent metal cation.

It catalyses the reaction 4-hydroxy-4-methyl-2-oxoglutarate = 2 pyruvate. The catalysed reaction is oxaloacetate + H(+) = pyruvate + CO2. Catalyzes the aldol cleavage of 4-hydroxy-4-methyl-2-oxoglutarate (HMG) into 2 molecules of pyruvate. Also contains a secondary oxaloacetate (OAA) decarboxylase activity due to the common pyruvate enolate transition state formed following C-C bond cleavage in the retro-aldol and decarboxylation reactions. This Cupriavidus taiwanensis (strain DSM 17343 / BCRC 17206 / CCUG 44338 / CIP 107171 / LMG 19424 / R1) (Ralstonia taiwanensis (strain LMG 19424)) protein is Putative 4-hydroxy-4-methyl-2-oxoglutarate aldolase.